The primary structure comprises 349 residues: Ferredoxin--NADP reductase (349 aa).

Positions 35, 43, 48, 88, 123, 288, and 329 each coordinate FAD.

Belongs to the ferredoxin--NADP reductase type 2 family. Homodimer. It depends on FAD as a cofactor.

The enzyme catalyses 2 reduced [2Fe-2S]-[ferredoxin] + NADP(+) + H(+) = 2 oxidized [2Fe-2S]-[ferredoxin] + NADPH. In Colwellia psychrerythraea (strain 34H / ATCC BAA-681) (Vibrio psychroerythus), this protein is Ferredoxin--NADP reductase.